We begin with the raw amino-acid sequence, 383 residues long: Glutamate 5-kinase (383 aa).

Lys-17 contacts ATP. Residues Ser-64, Asp-151, and Asn-165 each contribute to the substrate site. ATP is bound at residue 185–186; that stretch reads SD. The region spanning 291–367 is the PUA domain; it reads SGTIRVDAGA…DEIEGILGYN (77 aa).

This sequence belongs to the glutamate 5-kinase family.

The protein localises to the cytoplasm. It carries out the reaction L-glutamate + ATP = L-glutamyl 5-phosphate + ADP. It participates in amino-acid biosynthesis; L-proline biosynthesis; L-glutamate 5-semialdehyde from L-glutamate: step 1/2. Its function is as follows. Catalyzes the transfer of a phosphate group to glutamate to form L-glutamate 5-phosphate. This is Glutamate 5-kinase from Methanosarcina barkeri (strain Fusaro / DSM 804).